A 623-amino-acid chain; its full sequence is UvrABC system protein C (623 aa).

In terms of domain architecture, GIY-YIG spans 12-91 (FSPGVYLYKD…IKQYKPRFNI (80 aa)). Positions 201–236 (SDLARGLRARMEAASLEMRFEEAAGLRDLITTVEEI) constitute a UVR domain. The disordered stretch occupies residues 604–623 (PVASVAQSEDAAPDVPDPQA).

Belongs to the UvrC family. As to quaternary structure, interacts with UvrB in an incision complex.

It localises to the cytoplasm. In terms of biological role, the UvrABC repair system catalyzes the recognition and processing of DNA lesions. UvrC both incises the 5' and 3' sides of the lesion. The N-terminal half is responsible for the 3' incision and the C-terminal half is responsible for the 5' incision. The protein is UvrABC system protein C of Solibacter usitatus (strain Ellin6076).